We begin with the raw amino-acid sequence, 302 residues long: Galactofuranosyltransferase GlfT1 (302 aa).

The protein belongs to the glycosyltransferase 2 family.

It localises to the cell membrane. Its subcellular location is the secreted. The protein localises to the cell wall. It carries out the reaction alpha-L-rhamnosyl-(1-&gt;3)-N-acetyl-alpha-D-glucosaminyl-diphospho-trans,octa-cis-decaprenol + 2 UDP-alpha-D-galactofuranose = beta-D-galactofuranosyl-(1-&gt;5)-beta-D-galactofuranosyl-(1-&gt;4)-alpha-L-rhamnosyl-(1-&gt;3)-N-acetyl-alpha-D-glucosaminyl-diphospho-trans,octa-cis-decaprenol + 2 UDP + 2 H(+). It functions in the pathway cell wall biogenesis; cell wall polysaccharide biosynthesis. Involved in the biosynthesis of the arabinogalactan (AG) region of the mycolylarabinogalactan-peptidoglycan (mAGP) complex, an essential component of the mycobacterial cell wall. Catalyzes the transfer of the first two galactofuranosyl (Galf) units from UDP-galactofuranose (UDP-Galf) onto the rhamnosyl-GlcNAc-diphospho-decaprenol (Rha-GlcNAc-PP-C50) acceptor, yielding galactofuranosyl-galactofuranosyl-rhamnosyl-GlcNAc-diphospho-decaprenol (Galf-Galf-Rha-GlcNAc-PP-C50). Thus, GlfT1 is the initiator of galactan synthesis, while GlfT2 continues with the subsequent polymerization events. The chain is Galactofuranosyltransferase GlfT1 from Mycolicibacterium smegmatis (strain ATCC 700084 / mc(2)155) (Mycobacterium smegmatis).